Here is a 459-residue protein sequence, read N- to C-terminus: Probable rhamnogalacturonase C (459 aa).

Residues 1–18 (MRASILPLTLFLATLAGA) form the signal peptide. 5 N-linked (GlcNAc...) asparagine glycosylation sites follow: N36, N64, N77, N140, and N155. A disulfide bond links C39 and C65. Catalysis depends on D216, which acts as the Proton donor. The cysteines at positions 218 and 235 are disulfide-linked. Residues N236 and N251 are each glycosylated (N-linked (GlcNAc...) asparagine). Residue H290 is part of the active site. N315 carries an N-linked (GlcNAc...) asparagine glycan. The cysteines at positions 337 and 343 are disulfide-linked. N-linked (GlcNAc...) asparagine glycosylation occurs at N356. A disulfide bond links C365 and C374.

It belongs to the glycosyl hydrolase 28 family.

It localises to the secreted. Pectinolytic enzymes consist of four classes of enzymes: pectine lyase, polygalacturonase, pectin methylesterase and rhamnogalacturonase. Hydrolyzes alpha-D-galacturonopyranosyl-(1,2)-alpha-L-rhamnopyranosyl linkages in the backbone of the hairy regions of pectins. The chain is Probable rhamnogalacturonase C (rhgC) from Aspergillus niger (strain ATCC MYA-4892 / CBS 513.88 / FGSC A1513).